A 326-amino-acid polypeptide reads, in one-letter code: F-box/LRR-repeat protein 12 (326 aa).

Residues M1–V47 form the F-box domain. LRR repeat units lie at residues L51 to G78, A86 to V111, D113 to S133, V161 to G185, T186 to G211, C212 to T236, V237 to G261, and P266 to G291.

In terms of assembly, interacts with SKP1 and CUL1.

The protein operates within protein modification; protein ubiquitination. Its function is as follows. Substrate-recognition component of the SCF (SKP1-CUL1-F-box protein)-type E3 ubiquitin ligase complex. Mediates the polyubiquitination and proteasomal degradation of CAMK1 leading to disruption of cyclin D1/CDK4 complex assembly which results in G1 cell cycle arrest in lung epithelia. The protein is F-box/LRR-repeat protein 12 (FBXL12) of Homo sapiens (Human).